The sequence spans 519 residues: Putative cytochrome P450 CYP13A1 (519 aa).

Cys465 contacts heme.

The protein belongs to the cytochrome P450 family. It depends on heme as a cofactor.

Cytochromes P450 are a group of heme-thiolate monooxygenases. They oxidize a variety of structurally unrelated compounds, including steroids, fatty acids, and xenobiotics. The polypeptide is Putative cytochrome P450 CYP13A1 (cyp-13A1) (Caenorhabditis elegans).